Here is a 194-residue protein sequence, read N- to C-terminus: MMEPFRIHKGTAAVLMNDNIDTDQIIPKQYLKRIERTGFGKFLFDEWRYDNNRQENPNFPLNAQERKGASILITGDNFGCGSSREHAPWALADYGFRVIIAGGFADIFYMNCMKNGMLPIVMDKDMREQLAKTDAREQITVDLENEIMTTNTHRFHFTIEKMWKEKLLNGLDEISITMQYEQEIKEYERKVALH.

The protein belongs to the LeuD family. LeuD type 1 subfamily. As to quaternary structure, heterodimer of LeuC and LeuD.

The enzyme catalyses (2R,3S)-3-isopropylmalate = (2S)-2-isopropylmalate. It functions in the pathway amino-acid biosynthesis; L-leucine biosynthesis; L-leucine from 3-methyl-2-oxobutanoate: step 2/4. Catalyzes the isomerization between 2-isopropylmalate and 3-isopropylmalate, via the formation of 2-isopropylmaleate. This Bacillus cereus (strain ATCC 14579 / DSM 31 / CCUG 7414 / JCM 2152 / NBRC 15305 / NCIMB 9373 / NCTC 2599 / NRRL B-3711) protein is 3-isopropylmalate dehydratase small subunit.